A 953-amino-acid polypeptide reads, in one-letter code: MEEHGHHEMEGTPLGCHSHIKLLKINREHLVTNIRNTQCLVDNLLENGYFSAEDAEIVCACPTKPDKVRKILDLVQSKGEEVSEFFLYVLQQLEDAYVDLRLWLSEIGFSPSQLIRTKTIVNTDPVSRYTQQLRHQLGRDSKFMLCYAQKEDLLLEETYMDTLMELVGFNNENLGSLGGLDCLLDHSTGVLNEHGETVFVFGDAGVGKSMLLQRLQSLWASGRLTSTAKFFFHFRCRMFSCFKESDMLSLQDLLFKHFCYPEQDPEEVFSFLLRFPHTALFTFDGLDELHSDFDLSRVPDSCCPWEPAHPLVLLANLLSGRLLKGAGKLLTARTGVEVPRQLLRKKVLLRGFSPSHLRAYARRMFPERTAQEHLLQQLDANPNLCSLCGVPLFCWIIFRCFQHFQTVFEGSSSQLPDCAVTLTDVFLLVTEVHLNRPQPSSLVQRNTRSPAETLRAGWRTLHALGEVAHRGTDKSLFVFGQEEVQASKLQEGDLQLGFLRALPDVGPEQGQSYEFFHLTLQAFFTAFFLVADDKVSTRELLRFFREWTSPGEATSSSCHSSFFSFQCLGGRSRLGPDPFRNKDHFQFTNLFLCGLLAKARQKLLRQLVPKAILRRKRKALWAHLFASLRSYLKSLPRVQSGGFNQVHAMPTFLWMLRCIYETQSQKVGRLAARGISADYLKLAFCNACSADCSALSFVLHHFHRQLALDLDNNNLNDYGVQELQPCFSRLTVIRLSVNQITDTGVKVLCEELTKYKIVTFLGLYNNQITDIGARYVAQILDECRGLKHLKLGKNRITSEGGKCVALAVKNSTSIVDVGMWGNQIGDEGAKAFAEALKDHPSLTTLSLAFNGISPEGGKSLAQALKQNTTLTVIWLTKNELNDESAECFAEMLRVNQTLRHLWLIQNRITAKGTAQLARALQKNTAITEICLNGNLIKPEEAKVFENEKRIICF.

The CARD domain occupies 15–107 (GCHSHIKLLK…VDLRLWLSEI (93 aa)). One can recognise an NACHT domain in the interval 196-531 (ETVFVFGDAG…AFFTAFFLVA (336 aa)). An ATP-binding site is contributed by 202–209 (GDAGVGKS). S-palmitoyl cysteine attachment occurs at residues C558 and C567. LRR repeat units lie at residues 702–725 (FHRQ…ELQP), 727–750 (FSRL…VLCE), 755–778 (YKIV…YVAQ), 783–806 (CRGL…CVAL), 839–862 (HPSL…SLAQ), 867–890 (NTTL…CFAE), 895–918 (NQTL…QLAR), and 923–946 (NTAI…VFEN). A lipid anchor (S-palmitoyl cysteine) is attached at C952.

It belongs to the NOD1-NOD2 family. As to quaternary structure, homooligomer: homooligomerizes following ligand-binding, promoting RIPK2 recruitment. Interacts (via CARD domain) with RIPK2 (via CARD domain). Following RIPK2 recruitment, RIPK2 homooligomerizes via its CARD domain and forms long filaments named RIPosomes. Interacts (via CARD domain) with ubiquitin; inhibiting interaction with RIPK2. Interacts with ARHGEF2. Interacts with NLRP10 and recruits it to the cell membrane following invasive bacterial infection. Interacts with IFIH1; this interaction promotes transcription of antiviral genes and inhibition of viral replication. Interacts with Irgm1; promoting NOD1 degradation. Interacts with ATG16L1. Ubiquitinated. 'Lys-48'-linked polyubiquitination by RNF34 promotes proteasomal degradation and thereby negatively regulates NOD1 for instance in NF-kappa-B activation. Post-translationally, palmitoylated. Palmitoylation is required for proper recruitment to the bacterial entry site and hence for proper signaling upon cognate peptidoglycan detection. In terms of processing, degraded via selective autophagy following interaction with Irgm1. Irgm1 promotes NOD1-RIPK2 RIPosome recruitment to autophagosome membranes, promoting their SQSTM1/p62-dependent autophagic degradation. Although ubiquitously expressed, NOD1 levels are more abundant in immune cells, the gastrointestinal tract, and adipose tissue.

Its subcellular location is the cell membrane. The protein resides in the apical cell membrane. It is found in the basolateral cell membrane. It localises to the cytoplasm. In terms of biological role, pattern recognition receptor (PRR) that detects bacterial peptidoglycan fragments and other danger signals and thus participates in both innate and adaptive immune responses. Specifically recognizes and binds gamma-D-glutamyl-meso-diaminopimelic acid (iE-DAP), a dipeptide present in peptidoglycan of Gram-negative bacteria. Preferentially binds iE-DAP in tetrapeptide-containing muropeptides (MurNAc-TetraDAP or TetraDAP). Ligand binding triggers oligomerization that facilitates the binding and subsequent activation of the proximal adapter receptor-interacting RIPK2. Following recruitment, RIPK2 undergoes 'Met-1'- (linear) and 'Lys-63'-linked polyubiquitination by E3 ubiquitin-protein ligases XIAP, BIRC2, BIRC3 and the LUBAC complex, becoming a scaffolding protein for downstream effectors, triggering activation of the NF-kappa-B and MAP kinases signaling. This in turn leads to the transcriptional activation of hundreds of genes involved in immune response. Also acts as a regulator of antiviral response elicited by dsRNA and the expression of RLR pathway members by targeting IFIH1 and TRAF3 to modulate the formation of IFIH1-MAVS and TRAF3-MAVS complexes leading to increased transcription of type I IFNs. Also acts as a regulator of autophagy via its interaction with ATG16L1, possibly by recruiting ATG16L1 at the site of bacterial entry. Besides recognizing pathogens, also involved in the endoplasmic reticulum stress response: acts by sensing and binding to the cytosolic metabolite sphingosine-1-phosphate generated in response to endoplasmic reticulum stress, initiating an inflammation process that leads to activation of the NF-kappa-B and MAP kinases signaling. In addition, plays a role in insulin trafficking in beta cells in a cell-autonomous manner. Mechanistically, upon recognizing cognate ligands, NOD1 and RIPK2 localize to insulin vesicles where they recruit RAB1A to direct insulin trafficking through the cytoplasm. The protein is Nucleotide-binding oligomerization domain-containing protein 1 of Mus musculus (Mouse).